The primary structure comprises 760 residues: Catalase-peroxidase (760 aa).

An N-terminal signal peptide occupies residues 1–45; sequence MKGTPFRSPHLYQEGSSCMHRTIRSVAAVLTVVLSATIPMVPAWS. Residues 124–245 constitute a cross-link (tryptophyl-tyrosyl-methioninium (Trp-Tyr) (with M-271)); it reads WHGAGTYRTY…LAATQMGLIY (122 aa). The active-site Proton acceptor is His125. The segment at residues 245–271 is a cross-link (tryptophyl-tyrosyl-methioninium (Tyr-Met) (with W-124)); it reads YVNPEGPNGVPDPVAAARDIREAFGGM. His286 contributes to the heme b binding site.

Belongs to the peroxidase family. Peroxidase/catalase subfamily. In terms of assembly, homodimer or homotetramer. Heme b serves as cofactor. Formation of the three residue Trp-Tyr-Met cross-link is important for the catalase, but not the peroxidase activity of the enzyme.

The enzyme catalyses H2O2 + AH2 = A + 2 H2O. It carries out the reaction 2 H2O2 = O2 + 2 H2O. Its function is as follows. Bifunctional enzyme with both catalase and broad-spectrum peroxidase activity. This Granulibacter bethesdensis (strain ATCC BAA-1260 / CGDNIH1) protein is Catalase-peroxidase.